A 52-amino-acid chain; its full sequence is UPF0391 membrane protein XCV0245 (52 aa).

The next 2 membrane-spanning stretches (helical) occupy residues 5-25 and 27-47; these read AIIFFVIAIIAAVLGFSGIAG and ATNIAWILFVVFLILAVISMF.

It belongs to the UPF0391 family.

Its subcellular location is the cell membrane. This is UPF0391 membrane protein XCV0245 from Xanthomonas euvesicatoria pv. vesicatoria (strain 85-10) (Xanthomonas campestris pv. vesicatoria).